A 123-amino-acid polypeptide reads, in one-letter code: Small ribosomal subunit protein uS12 (123 aa).

At Asp89 the chain carries 3-methylthioaspartic acid.

The protein belongs to the universal ribosomal protein uS12 family. As to quaternary structure, part of the 30S ribosomal subunit. Contacts proteins S8 and S17. May interact with IF1 in the 30S initiation complex.

Functionally, with S4 and S5 plays an important role in translational accuracy. Interacts with and stabilizes bases of the 16S rRNA that are involved in tRNA selection in the A site and with the mRNA backbone. Located at the interface of the 30S and 50S subunits, it traverses the body of the 30S subunit contacting proteins on the other side and probably holding the rRNA structure together. The combined cluster of proteins S8, S12 and S17 appears to hold together the shoulder and platform of the 30S subunit. In Rhodopseudomonas palustris (strain BisA53), this protein is Small ribosomal subunit protein uS12.